Consider the following 232-residue polypeptide: Triosephosphate isomerase (232 aa).

6-8 (NFK) contacts substrate. The active-site Electrophile is histidine 86. Glutamate 155 serves as the catalytic Proton acceptor. Substrate contacts are provided by glycine 161 and serine 191.

It belongs to the triosephosphate isomerase family. In terms of assembly, homodimer.

It localises to the cytoplasm. The catalysed reaction is D-glyceraldehyde 3-phosphate = dihydroxyacetone phosphate. Its pathway is carbohydrate biosynthesis; gluconeogenesis. The protein operates within carbohydrate degradation; glycolysis; D-glyceraldehyde 3-phosphate from glycerone phosphate: step 1/1. Functionally, involved in the gluconeogenesis. Catalyzes stereospecifically the conversion of dihydroxyacetone phosphate (DHAP) to D-glyceraldehyde-3-phosphate (G3P). This Nitratiruptor sp. (strain SB155-2) protein is Triosephosphate isomerase.